The chain runs to 161 residues: NADH-quinone oxidoreductase subunit C (161 aa).

It belongs to the complex I 30 kDa subunit family. In terms of assembly, NDH-1 is composed of 14 different subunits. Subunits NuoB, C, D, E, F, and G constitute the peripheral sector of the complex.

The protein localises to the cell inner membrane. It catalyses the reaction a quinone + NADH + 5 H(+)(in) = a quinol + NAD(+) + 4 H(+)(out). In terms of biological role, NDH-1 shuttles electrons from NADH, via FMN and iron-sulfur (Fe-S) centers, to quinones in the respiratory chain. The immediate electron acceptor for the enzyme in this species is believed to be ubiquinone. Couples the redox reaction to proton translocation (for every two electrons transferred, four hydrogen ions are translocated across the cytoplasmic membrane), and thus conserves the redox energy in a proton gradient. The sequence is that of NADH-quinone oxidoreductase subunit C from Citrifermentans bemidjiense (strain ATCC BAA-1014 / DSM 16622 / JCM 12645 / Bem) (Geobacter bemidjiensis).